The primary structure comprises 983 residues: Importin beta-like protein kap113 (983 aa).

Residues 24–96 (AEGHLNNWKK…RCNALLGSIK (73 aa)) form the Importin N-terminal domain.

The protein belongs to the importin beta family.

The protein localises to the nucleus. Functions as a component of the nuclear pore complex (NPC). NPC components, collectively referred to as nucleoporins (NUPs), can play the role of both NPC structural components and of docking or interaction partners for transiently associated nuclear transport factors. Active directional transport is assured by both, a Phe-Gly (FG) repeat affinity gradient for these transport factors across the NPC and a transport cofactor concentration gradient across the nuclear envelope. Involved in the export of mRNA from the nucleus to the cytoplasm. May play a role in mitotic spindle formation and/or function. This is Importin beta-like protein kap113 (kap113) from Schizosaccharomyces pombe (strain 972 / ATCC 24843) (Fission yeast).